A 67-amino-acid chain; its full sequence is Small integral membrane protein 20 (67 aa).

Residues 1–6 lie on the Mitochondrial matrix side of the membrane; that stretch reads MSRNLR. Residues 7–27 traverse the membrane as a helical segment; it reads TALIFGGFISLIGAAFYPIYF. Residues 28–67 are Mitochondrial intermembrane-facing; sequence RPLMRLEEYKKEQAINRAGIVQEDVQPPGLKVWSDPFGRK. A Phenylalanine amide modification is found at Phe-64.

In terms of assembly, component of the MITRAC (mitochondrial translation regulation assembly intermediate of cytochrome c oxidase complex) complex, the core components of this complex being COA3/MITRAC12 and COX14. Interacts with COA3/MITRAC12 and COX4I1. Directly interacts with newly synthesized MT-CO1/COX1. As to expression, expressed in the ovary, specifically in granulosa cells of follicles that have passed the primary stage and in oocytes (at protein level).

It localises to the mitochondrion inner membrane. The protein resides in the secreted. Its function is as follows. Component of the MITRAC (mitochondrial translation regulation assembly intermediate of cytochrome c oxidase complex) complex, that regulates cytochrome c oxidase assembly. Promotes the progression of complex assembly after the association of MT-CO1/COX1 with COX4I1 and COX6C. Chaperone-like assembly factor required to stabilize newly synthesized MT-CO1/COX1 and to prevent its premature turnover. Peptide involved in a broad spectrum of regulatory functions. Is a ligand for GPR173. As part of the reproductive cycle, it regulates gonadotropin-releasing hormone (GnRH) signaling in the hypothalamus and pituitary gland which augments the release of luteinizing hormone. Plays a protective role in memory retention through activation of GNRHR. Regulates the secretion of AVP by hypothalamic neurons. Plays a role in the transduction of the itch sensation. Induces anxiolytic effects, reducing behavior associated with anxiety. Regulates food intake as well as satiation and satiety. In the ovary, it regulates follicular growth by stimulating granulosa cell proliferation by increasing the expression of GPR173, CREB1, CYP19A1, KITLG, FSHR, and LHCGR. It also increases the production of estradiol (E2). In the heart, it regulates contractility and relaxation. It also plays a cardioprotective role during ischemia, where it activates the SAFE and RISK pathways. Stimulates the proliferation and differentiation of preadipocytes. In pancreatic islet cells, it induces proliferation of islet cells as well as the production of INS. The sequence is that of Small integral membrane protein 20 (SMIM20) from Homo sapiens (Human).